A 280-amino-acid polypeptide reads, in one-letter code: 2-dehydro-3-deoxyphosphooctonate aldolase (280 aa).

This sequence belongs to the KdsA family.

Its subcellular location is the cytoplasm. It catalyses the reaction D-arabinose 5-phosphate + phosphoenolpyruvate + H2O = 3-deoxy-alpha-D-manno-2-octulosonate-8-phosphate + phosphate. It functions in the pathway carbohydrate biosynthesis; 3-deoxy-D-manno-octulosonate biosynthesis; 3-deoxy-D-manno-octulosonate from D-ribulose 5-phosphate: step 2/3. It participates in bacterial outer membrane biogenesis; lipopolysaccharide biosynthesis. The chain is 2-dehydro-3-deoxyphosphooctonate aldolase from Thioalkalivibrio sulfidiphilus (strain HL-EbGR7).